The sequence spans 222 residues: Large ribosomal subunit protein uL4 (222 aa).

It belongs to the universal ribosomal protein uL4 family. Part of the 50S ribosomal subunit.

Its function is as follows. One of the primary rRNA binding proteins, this protein initially binds near the 5'-end of the 23S rRNA. It is important during the early stages of 50S assembly. It makes multiple contacts with different domains of the 23S rRNA in the assembled 50S subunit and ribosome. Functionally, forms part of the polypeptide exit tunnel. In Methylacidiphilum infernorum (isolate V4) (Methylokorus infernorum (strain V4)), this protein is Large ribosomal subunit protein uL4.